A 174-amino-acid chain; its full sequence is Isomerase prhC (174 aa).

The protein belongs to the trt14 isomerase family. As to quaternary structure, homodimer.

It participates in secondary metabolite biosynthesis; terpenoid biosynthesis. Its function is as follows. Isomerase; part of the gene cluster that mediates the biosynthesis of paraherquonin, a meroterpenoid with a unique, highly congested hexacyclic molecular architecture. The first step of the pathway is the synthesis of 3,5-dimethylorsellinic acid (DMOA) by the polyketide synthase prhL. Synthesis of DMOA is followed by farnesylation by the prenyltransferase prhE, methylesterification by the methyl-transferase prhM, epoxidation of the prenyl chain by the flavin-dependent monooxygenase prhF, and cyclization of the farnesyl moiety by the terpene cyclase prhH, to yield the tetracyclic intermediate, protoaustinoid A. The short chain dehydrogenase prhI then oxidizes the C-3 alcohol group of the terpene cyclase product to transform protoaustinoid A into protoaustinoid B. The FAD-binding monooxygenase prhJ catalyzes the oxidation of protoaustinoid B into preaustinoid A which is further oxidized into preaustinoid A1 by FAD-binding monooxygenase phrK. Finally, prhA leads to berkeleydione via the berkeleyone B intermediate. PrhA is a multifunctional dioxygenase that first desaturates at C5-C6 to form berkeleyone B, followed by rearrangement of the A/B-ring to form the cycloheptadiene moiety in berkeleydione. Berkeleydione serves as the key intermediate for the biosynthesis of paraherquonin as well as many other meroterpenoids. The cytochrome P450 monooxygenases prhB, prhD, and prhN, as well as the isomerase prhC, are probably involved in the late stage of paraherquonin biosynthesis, after the production of berkeleydione. Especially prhC might be a multifunctional enzyme that catalyzes the D-ring expansion via intramolecular methoxy rearrangement, as well as the hydrolysis of the expanded D-ring. This is Isomerase prhC from Penicillium brasilianum.